Here is a 151-residue protein sequence, read N- to C-terminus: Cell division control protein 2 homolog 2 (151 aa).

Residues Ala1–Leu151 enclose the Protein kinase domain. Lys3 is an ATP binding site. Catalysis depends on Asp113, which acts as the Proton acceptor.

This sequence belongs to the protein kinase superfamily. CMGC Ser/Thr protein kinase family. CDC2/CDKX subfamily.

It catalyses the reaction L-seryl-[protein] + ATP = O-phospho-L-seryl-[protein] + ADP + H(+). The catalysed reaction is L-threonyl-[protein] + ATP = O-phospho-L-threonyl-[protein] + ADP + H(+). It carries out the reaction [DNA-directed RNA polymerase] + ATP = phospho-[DNA-directed RNA polymerase] + ADP + H(+). This Pisum sativum (Garden pea) protein is Cell division control protein 2 homolog 2.